Consider the following 461-residue polypeptide: Phosphoglucosamine mutase (461 aa).

Residue Ser-107 is the Phosphoserine intermediate of the active site. Mg(2+)-binding residues include Ser-107, Asp-254, Asp-256, and Asp-258. Phosphoserine is present on Ser-107.

It belongs to the phosphohexose mutase family. Mg(2+) is required as a cofactor. Post-translationally, activated by phosphorylation.

The catalysed reaction is alpha-D-glucosamine 1-phosphate = D-glucosamine 6-phosphate. Catalyzes the conversion of glucosamine-6-phosphate to glucosamine-1-phosphate. In Bifidobacterium longum (strain DJO10A), this protein is Phosphoglucosamine mutase.